Reading from the N-terminus, the 298-residue chain is uncharacterized protein (298 aa).

Helical transmembrane passes span 5–23, 33–52, 72–91, 101–120, 127–145, 149–166, 175–194, 207–229, 238–260, and 265–284; these read ILVSLLASFLFGYMYYFST, IFGYRMIFTFPFVLLSVTLF, ALSYLLCGLLMGFQMWLFLW, VSFGYLLLPIVMVAAGRVFF, FKFIAVIIATLGVISNIVL, LSWEAIVICLGYTAYFSI, LASFCLEMLSLMPVSIYFAL, FIWGXLVLLGLISGTALIAYVIA, LGLLGYVETIMMLCVSFLIGEQI, and YPLFICLVIAMILVMVDGVY. The EamA domain occupies 13-144; it reads FLFGYMYYFS…ATLGVISNIV (132 aa).

It belongs to the EamA transporter family.

Its subcellular location is the cell membrane. This is an uncharacterized protein from Haemophilus influenzae (strain ATCC 51907 / DSM 11121 / KW20 / Rd).